Consider the following 134-residue polypeptide: Small ribosomal subunit protein uS8c (134 aa).

This sequence belongs to the universal ribosomal protein uS8 family. In terms of assembly, part of the 30S ribosomal subunit.

It localises to the plastid. The protein resides in the chloroplast. Functionally, one of the primary rRNA binding proteins, it binds directly to 16S rRNA central domain where it helps coordinate assembly of the platform of the 30S subunit. The protein is Small ribosomal subunit protein uS8c (rps8) of Populus alba (White poplar).